The sequence spans 248 residues: Transcription factor MYBC1 (248 aa).

A DNA-binding region (myb-like GARP) is located at residues 102 to 161; that stretch reads TLKRPRLVWTPQLHKRFVDAVGHLGIKNAVPKTIMQLMSVEGLTRENVASHLQKYRLYLR.

As to expression, expressed in roots, leaves, stems, petioles, filaments, stigma, pedicels, sepals, anthers, petals, and siliques.

It is found in the nucleus. In terms of biological role, probable transcription factor that acts as a negative regulator of freezing tolerance via a CBF-independent pathway. The chain is Transcription factor MYBC1 from Arabidopsis thaliana (Mouse-ear cress).